The sequence spans 664 residues: Protein fem-1 homolog CG6966 (664 aa).

6 ANK repeats span residues 40–70 (NGATPLVISCRNGHYDIVEYLLTKCRANVEQ), 82–111 (EDAPPLWCAAAAGHLGIVKMLVRRGANVNS), 115–144 (TNSTPLRAACFDGHYEIVKYLVHHGADFEV), 148–177 (HGHTCLMIACYKGHFRIAQYLLSLNADVNR), 181–210 (KGNTALHDCAESGSLQILQLLLKHGATMDV), and 213–242 (YGMTPLLAASVTGHMPIVEHLITLPCVSRE). 2 TPR repeats span residues 245 to 279 (IHALELLGATYVDRKRDMAAALNLWRRALEERAVE) and 335 to 368 (SYYIRFRGAHYADAGRFDRCIELWSYALTMQQKI). The segment at 433–460 (QQKDQQHPQKQLPAADKSPSCSASSSAS) is disordered. Residues 450-460 (SPSCSASSSAS) show a composition bias toward low complexity. 2 ANK repeats span residues 529–571 (FDRT…DPNA) and 575–605 (AGNTPLHLATMQPYVEPLSHILLEGGAHLDT).

It belongs to the fem-1 family. Component of a CRL2 E3 ubiquitin-protein ligase complex, also named ECS (Elongin BC-CUL2/5-SOCS-box protein) complex.

It functions in the pathway protein modification; protein ubiquitination. Its function is as follows. Substrate-recognition component of a Cul2-RING (CRL2) E3 ubiquitin-protein ligase complex of the DesCEND (destruction via C-end degrons) pathway, which recognizes a C-degron located at the extreme C terminus of target proteins, leading to their ubiquitination and degradation. The C-degron recognized by the DesCEND pathway is usually a motif of less than ten residues and can be present in full-length proteins, truncated proteins or proteolytically cleaved forms. The sequence is that of Protein fem-1 homolog CG6966 from Drosophila melanogaster (Fruit fly).